A 472-amino-acid polypeptide reads, in one-letter code: Inactive CLIP domain-containing serine protease A3 (472 aa).

Transmembrane regions (helical) follow at residues 51 to 71 (ISFV…WSSM) and 78 to 98 (LPAL…HTYA). 4 N-linked (GlcNAc...) asparagine glycosylation sites follow: Asn122, Asn133, Asn149, and Asn152. The Peptidase S1 domain occupies 223–470 (VAAAKAPAAG…YVPWITSTVS (248 aa)). Disulfide bonds link Cys354–Cys428, Cys386–Cys408, and Cys418–Cys446.

The protein belongs to the peptidase S1 family. CLIP subfamily. As to expression, expressed at highest levels in head and salivary gland. Expressed in ovary and carcass. Minimal expression in midgut.

Its subcellular location is the membrane. Probable inactive serine protease. Induces migration of cultured mouse embryonic fibroblasts. In terms of biological role, (Microbial infection) Promotes dengue virus type 2 replication in the host. This chain is Inactive CLIP domain-containing serine protease A3, found in Aedes aegypti (Yellowfever mosquito).